The sequence spans 550 residues: Chaperonin GroEL (550 aa).

ATP contacts are provided by residues 30-33 (TLGP), Lys51, 87-91 (DGTTT), Gly415, and Asp496. The tract at residues 528–550 (EGGDMPAMPPGGMGGMGGMGGMM) is disordered. Residues 538-550 (GGMGGMGGMGGMM) are compositionally biased toward gly residues.

Belongs to the chaperonin (HSP60) family. Forms a cylinder of 14 subunits composed of two heptameric rings stacked back-to-back. Interacts with the co-chaperonin GroES.

Its subcellular location is the cytoplasm. It carries out the reaction ATP + H2O + a folded polypeptide = ADP + phosphate + an unfolded polypeptide.. Together with its co-chaperonin GroES, plays an essential role in assisting protein folding. The GroEL-GroES system forms a nano-cage that allows encapsulation of the non-native substrate proteins and provides a physical environment optimized to promote and accelerate protein folding. The chain is Chaperonin GroEL from Chlorobium phaeobacteroides (strain BS1).